The chain runs to 558 residues: Phosphatidylserine lipase ABHD16A (558 aa).

A run of 2 helical transmembrane segments spans residues 60–80 (ILALASVFWSISYYSSPFAFF) and 93–113 (VVPFSHYAGTLLVLLAGVACL). Topologically, residues 114-558 (RGIGRWTNPQ…AQHFQMPWCL (445 aa)) are cytoplasmic. The AB hydrolase-1 domain maps to 281-407 (LVICCEGNAG…LVTRTVRQHL (127 aa)). Active-site charge relay system residues include Ser355, Asp430, and His507.

It belongs to the AB hydrolase superfamily. ABHD16 family.

It is found in the membrane. It catalyses the reaction 1-heptadecanoyl-2-(5Z,8Z,11Z,14Z-eicosatetraenoyl)-sn-glycero-3-phosphoserine + H2O = 1-heptadecanoyl-sn-glycero-3-phosphoserine + (5Z,8Z,11Z,14Z)-eicosatetraenoate + H(+). The enzyme catalyses 1-hexadecanoyl-2-(9Z-octadecenoyl)-sn-glycero-3-phospho-L-serine + H2O = 1-hexadecanoyl-sn-glycero-3-phospho-L-serine + (9Z)-octadecenoate + H(+). The catalysed reaction is 1-octadecanoyl-2-(9Z,12Z-octadecadienoyl)-sn-glycero-3-phosphoserine + H2O = 1-octadecanoyl-sn-glycero-3-phosphoserine + (9Z,12Z)-octadecadienoate + H(+). It carries out the reaction 1-heptadecanoyl-2-(5Z,8Z,11Z,14Z-eicosatetraenoyl)-sn-glycero-3-phosphocholine + H2O = 1-heptadecanoyl-sn-glycero-3-phosphocholine + (5Z,8Z,11Z,14Z)-eicosatetraenoate + H(+). It catalyses the reaction 1-hexadecanoyl-2-(9Z-octadecenoyl)-sn-glycero-3-phosphoglycerol + H2O = 1-hexadecanoyl-sn-glycero-3-phosphoglycerol + (9Z)-octadecenoate + H(+). The enzyme catalyses 1-hexadecanoyl-2-(9Z-octadecenoyl)-sn-glycero-3-phospho-(1D-myo-inositol) + H2O = 1-hexadecanoyl-sn-glycero-3-phospho-(1D-myo-inositol) + (9Z)-octadecenoate + H(+). The catalysed reaction is 1-heptadecanoyl-2-(5Z,8Z,11Z,14Z-eicosatetraenoyl)-sn-glycero-3-phosphoethanolamine + H2O = 1-heptadecanoyl-sn-glycero-3-phosphoethanolamine + (5Z,8Z,11Z,14Z)-eicosatetraenoate + H(+). It carries out the reaction 1-hexadecanoyl-2-(9Z-octadecenoyl)-sn-glycero-3-phospho-(1'-sn-glycerol) + H2O = 1-hexadecanoyl-sn-glycero-3-phospho-(1'-sn-glycerol) + (9Z)-octadecenoate + H(+). It catalyses the reaction Hydrolyzes glycerol monoesters of long-chain fatty acids.. The enzyme catalyses 1-tetradecanoylglycerol + H2O = tetradecanoate + glycerol + H(+). The catalysed reaction is 2-hexadecanoylglycerol + H2O = glycerol + hexadecanoate + H(+). It carries out the reaction 1-(9Z-octadecenoyl)-glycerol + H2O = glycerol + (9Z)-octadecenoate + H(+). It catalyses the reaction 2-(9Z-octadecenoyl)-glycerol + H2O = glycerol + (9Z)-octadecenoate + H(+). The enzyme catalyses 2-(9Z,12Z-octadecadienoyl)-glycerol + H2O = (9Z,12Z)-octadecadienoate + glycerol + H(+). The catalysed reaction is 1-(5Z,8Z,11Z,14Z-eicosatetraenoyl)-glycerol + H2O = glycerol + (5Z,8Z,11Z,14Z)-eicosatetraenoate + H(+). It carries out the reaction 2-(5Z,8Z,11Z,14Z-eicosatetraenoyl)-glycerol + H2O = glycerol + (5Z,8Z,11Z,14Z)-eicosatetraenoate + H(+). It catalyses the reaction prostaglandin D2-1-glycerol ester + H2O = prostaglandin D2 + glycerol + H(+). The enzyme catalyses 2-glyceryl-15-deoxy-Delta(12,14)-prostaglandin J2 + H2O = 15-deoxy-Delta(12,14)-prostaglandin J2 + glycerol + H(+). The catalysed reaction is 1-(9Z,12Z-octadecadienoyl)-glycerol + H2O = (9Z,12Z)-octadecadienoate + glycerol + H(+). Phosphatidylserine (PS) lipase that mediates the hydrolysis of phosphatidylserine to generate lysophosphatidylserine (LPS). LPS constitutes a class of signaling lipids that regulates immunological and neurological processes. Has no activity towards diacylglycerol, triacylglycerol or lysophosphatidylserine lipase. Also has monoacylglycerol lipase activity, with preference for 1-(9Z,12Z-octadecadienoyl)-glycerol (1-LG) and 2-glyceryl-15-deoxy-Delta(12,14)-prostaglandin J2 (15d-PGJ(2)-G). This is Phosphatidylserine lipase ABHD16A from Rattus norvegicus (Rat).